A 244-amino-acid chain; its full sequence is Leucyl/phenylalanyl-tRNA--protein transferase (244 aa).

The protein belongs to the L/F-transferase family.

The protein resides in the cytoplasm. It carries out the reaction N-terminal L-lysyl-[protein] + L-leucyl-tRNA(Leu) = N-terminal L-leucyl-L-lysyl-[protein] + tRNA(Leu) + H(+). It catalyses the reaction N-terminal L-arginyl-[protein] + L-leucyl-tRNA(Leu) = N-terminal L-leucyl-L-arginyl-[protein] + tRNA(Leu) + H(+). The catalysed reaction is L-phenylalanyl-tRNA(Phe) + an N-terminal L-alpha-aminoacyl-[protein] = an N-terminal L-phenylalanyl-L-alpha-aminoacyl-[protein] + tRNA(Phe). Functionally, functions in the N-end rule pathway of protein degradation where it conjugates Leu, Phe and, less efficiently, Met from aminoacyl-tRNAs to the N-termini of proteins containing an N-terminal arginine or lysine. In Thermodesulfovibrio yellowstonii (strain ATCC 51303 / DSM 11347 / YP87), this protein is Leucyl/phenylalanyl-tRNA--protein transferase.